The primary structure comprises 37 residues: Large ribosomal subunit protein bL36 (37 aa).

The protein belongs to the bacterial ribosomal protein bL36 family.

In Halalkalibacterium halodurans (strain ATCC BAA-125 / DSM 18197 / FERM 7344 / JCM 9153 / C-125) (Bacillus halodurans), this protein is Large ribosomal subunit protein bL36.